The chain runs to 372 residues: Glutamate 5-kinase (372 aa).

Residue K14 participates in ATP binding. Substrate contacts are provided by S54, D141, and N153. T173 to D174 lines the ATP pocket. A PUA domain is found at R280–V358.

It belongs to the glutamate 5-kinase family.

It localises to the cytoplasm. It catalyses the reaction L-glutamate + ATP = L-glutamyl 5-phosphate + ADP. It functions in the pathway amino-acid biosynthesis; L-proline biosynthesis; L-glutamate 5-semialdehyde from L-glutamate: step 1/2. Functionally, catalyzes the transfer of a phosphate group to glutamate to form L-glutamate 5-phosphate. In Stutzerimonas stutzeri (strain A1501) (Pseudomonas stutzeri), this protein is Glutamate 5-kinase.